The primary structure comprises 386 residues: DNA dC-&gt;dU-editing enzyme APOBEC-3D (386 aa).

CMP/dCMP-type deaminase domains lie at 29–145 (GRSY…DWRW) and 187–334 (DDNY…LCSL). Positions 78, 109, 112, and 262 each coordinate Zn(2+). Glutamate 264 acts as the Proton donor in catalysis. Cysteine 293 and cysteine 296 together coordinate Zn(2+).

This sequence belongs to the cytidine and deoxycytidylate deaminase family. Can form homo- and heterodimers with APOBEC3F and APOBEC3G. Interacts with L1RE1; this interaction inhibits LINE-1 retrotransposition. In terms of assembly, (Microbial infection) Interacts with HIV-1 Vif. This interaction triggers APOBEC3D polyubiquitylation and degradation by the 26S proteasome. Zn(2+) is required as a cofactor. In terms of tissue distribution, expressed in lymphoid organs. Also detected in non-lymphoid tissues including lung.

Its subcellular location is the cytoplasm. It localises to the P-body. It carries out the reaction a 2'-deoxycytidine in single-stranded DNA + H2O + H(+) = a 2'-deoxyuridine in single-stranded DNA + NH4(+). Its activity is regulated as follows. (Microbial infection) Antiviral activity is neutralized by the HIV-1 virion infectivity factor (Vif), that prevents its incorporation into progeny virions by both inhibiting its translation and/or by inducing its ubiquitination and subsequent degradation by the 26S proteasome. Its function is as follows. DNA deaminase (cytidine deaminase) which acts as an inhibitor of retrovirus replication and retrotransposon mobility via deaminase-dependent and -independent mechanisms. Exhibits antiviral activity against HIV-1. After the penetration of retroviral nucleocapsids into target cells of infection and the initiation of reverse transcription, it can induce the conversion of cytosine to uracil in the minus-sense single-strand viral DNA, leading to G-to-A hypermutations in the subsequent plus-strand viral DNA. The resultant detrimental levels of mutations in the proviral genome, along with a deamination-independent mechanism that works prior to the proviral integration, together exert efficient antiretroviral effects in infected target cells. Selectively targets single-stranded DNA and does not deaminate double-stranded DNA or single- or double-stranded RNA. Also inhibits the mobility of LTR and non-LTR retrotransposons. Functionally, (Microbial infection) Enhances hepatitis B virus/HBV replication by excluding restriction factors APOBEC3F and APOBEC3G from HBV capsids. This is DNA dC-&gt;dU-editing enzyme APOBEC-3D from Homo sapiens (Human).